The sequence spans 229 residues: Orotidine 5'-phosphate decarboxylase (229 aa).

Substrate contacts are provided by residues aspartate 10, lysine 32, 59–68 (DLKFHDIPNT), threonine 119, arginine 180, glutamine 189, glycine 209, and arginine 210. Catalysis depends on lysine 61, which acts as the Proton donor.

Belongs to the OMP decarboxylase family. Type 1 subfamily. As to quaternary structure, homodimer.

It catalyses the reaction orotidine 5'-phosphate + H(+) = UMP + CO2. The protein operates within pyrimidine metabolism; UMP biosynthesis via de novo pathway; UMP from orotate: step 2/2. In terms of biological role, catalyzes the decarboxylation of orotidine 5'-monophosphate (OMP) to uridine 5'-monophosphate (UMP). In Legionella pneumophila (strain Corby), this protein is Orotidine 5'-phosphate decarboxylase.